Consider the following 227-residue polypeptide: Cytochrome c oxidase subunit 2 (227 aa).

Residues 1 to 14 lie on the Mitochondrial intermembrane side of the membrane; the sequence is MAYPMQLGFQDATS. A helical membrane pass occupies residues 15-45; it reads PIMEELLHFHDHTLMIVFLISSLVLYIISLM. Topologically, residues 46–59 are mitochondrial matrix; sequence LTTKLTHTSTMDAQ. A helical membrane pass occupies residues 60–87; it reads EVETIWTILPAIILILIALPSLRILYMM. Residues 88 to 227 lie on the Mitochondrial intermembrane side of the membrane; the sequence is DEINNPSLTV…YFEKWSASML (140 aa). Cu cation-binding residues include His161, Cys196, Glu198, Cys200, His204, and Met207. Glu198 serves as a coordination point for Mg(2+). A Phosphotyrosine modification is found at Tyr218.

The protein belongs to the cytochrome c oxidase subunit 2 family. As to quaternary structure, component of the cytochrome c oxidase (complex IV, CIV), a multisubunit enzyme composed of 14 subunits. The complex is composed of a catalytic core of 3 subunits MT-CO1, MT-CO2 and MT-CO3, encoded in the mitochondrial DNA, and 11 supernumerary subunits COX4I, COX5A, COX5B, COX6A, COX6B, COX6C, COX7A, COX7B, COX7C, COX8 and NDUFA4, which are encoded in the nuclear genome. The complex exists as a monomer or a dimer and forms supercomplexes (SCs) in the inner mitochondrial membrane with NADH-ubiquinone oxidoreductase (complex I, CI) and ubiquinol-cytochrome c oxidoreductase (cytochrome b-c1 complex, complex III, CIII), resulting in different assemblies (supercomplex SCI(1)III(2)IV(1) and megacomplex MCI(2)III(2)IV(2)). Found in a complex with TMEM177, COA6, COX18, COX20, SCO1 and SCO2. Interacts with TMEM177 in a COX20-dependent manner. Interacts with COX20. Interacts with COX16. It depends on Cu cation as a cofactor.

Its subcellular location is the mitochondrion inner membrane. It carries out the reaction 4 Fe(II)-[cytochrome c] + O2 + 8 H(+)(in) = 4 Fe(III)-[cytochrome c] + 2 H2O + 4 H(+)(out). Its function is as follows. Component of the cytochrome c oxidase, the last enzyme in the mitochondrial electron transport chain which drives oxidative phosphorylation. The respiratory chain contains 3 multisubunit complexes succinate dehydrogenase (complex II, CII), ubiquinol-cytochrome c oxidoreductase (cytochrome b-c1 complex, complex III, CIII) and cytochrome c oxidase (complex IV, CIV), that cooperate to transfer electrons derived from NADH and succinate to molecular oxygen, creating an electrochemical gradient over the inner membrane that drives transmembrane transport and the ATP synthase. Cytochrome c oxidase is the component of the respiratory chain that catalyzes the reduction of oxygen to water. Electrons originating from reduced cytochrome c in the intermembrane space (IMS) are transferred via the dinuclear copper A center (CU(A)) of subunit 2 and heme A of subunit 1 to the active site in subunit 1, a binuclear center (BNC) formed by heme A3 and copper B (CU(B)). The BNC reduces molecular oxygen to 2 water molecules using 4 electrons from cytochrome c in the IMS and 4 protons from the mitochondrial matrix. The sequence is that of Cytochrome c oxidase subunit 2 (MT-CO2) from Bison bonasus (European bison).